We begin with the raw amino-acid sequence, 568 residues long: 2-succinyl-5-enolpyruvyl-6-hydroxy-3-cyclohexene-1-carboxylate synthase (568 aa).

Belongs to the TPP enzyme family. MenD subfamily. Homodimer. It depends on Mg(2+) as a cofactor. Requires Mn(2+) as cofactor. Thiamine diphosphate serves as cofactor.

It catalyses the reaction isochorismate + 2-oxoglutarate + H(+) = 5-enolpyruvoyl-6-hydroxy-2-succinyl-cyclohex-3-ene-1-carboxylate + CO2. Its pathway is quinol/quinone metabolism; 1,4-dihydroxy-2-naphthoate biosynthesis; 1,4-dihydroxy-2-naphthoate from chorismate: step 2/7. It functions in the pathway quinol/quinone metabolism; menaquinone biosynthesis. Functionally, catalyzes the thiamine diphosphate-dependent decarboxylation of 2-oxoglutarate and the subsequent addition of the resulting succinic semialdehyde-thiamine pyrophosphate anion to isochorismate to yield 2-succinyl-5-enolpyruvyl-6-hydroxy-3-cyclohexene-1-carboxylate (SEPHCHC). This Haemophilus influenzae (strain ATCC 51907 / DSM 11121 / KW20 / Rd) protein is 2-succinyl-5-enolpyruvyl-6-hydroxy-3-cyclohexene-1-carboxylate synthase.